Reading from the N-terminus, the 237-residue chain is Sugar fermentation stimulation protein homolog (237 aa).

The protein belongs to the SfsA family.

The sequence is that of Sugar fermentation stimulation protein homolog from Pseudomonas fluorescens (strain Pf0-1).